We begin with the raw amino-acid sequence, 211 residues long: UPF0056 membrane protein BUsg_257 (211 aa).

6 consecutive transmembrane segments (helical) span residues 14-34 (FFVS…FTTM), 54-74 (AFII…AFGI), 76-96 (INSF…SMIS), 116-136 (VVPL…TIVW), 144-164 (SDFL…WLCF), and 185-205 (IMGL…IKSI).

This sequence belongs to the UPF0056 (MarC) family.

It is found in the cell membrane. This chain is UPF0056 membrane protein BUsg_257, found in Buchnera aphidicola subsp. Schizaphis graminum (strain Sg).